Consider the following 154-residue polypeptide: ATP synthase subunit b (154 aa).

The helical transmembrane segment at 5-27 (LLGQAIAFTLFVWFCMKYVWPPI) threads the bilayer.

This sequence belongs to the ATPase B chain family. In terms of assembly, F-type ATPases have 2 components, F(1) - the catalytic core - and F(0) - the membrane proton channel. F(1) has five subunits: alpha(3), beta(3), gamma(1), delta(1), epsilon(1). F(0) has three main subunits: a(1), b(2) and c(10-14). The alpha and beta chains form an alternating ring which encloses part of the gamma chain. F(1) is attached to F(0) by a central stalk formed by the gamma and epsilon chains, while a peripheral stalk is formed by the delta and b chains.

The protein localises to the cell inner membrane. In terms of biological role, f(1)F(0) ATP synthase produces ATP from ADP in the presence of a proton or sodium gradient. F-type ATPases consist of two structural domains, F(1) containing the extramembraneous catalytic core and F(0) containing the membrane proton channel, linked together by a central stalk and a peripheral stalk. During catalysis, ATP synthesis in the catalytic domain of F(1) is coupled via a rotary mechanism of the central stalk subunits to proton translocation. Its function is as follows. Component of the F(0) channel, it forms part of the peripheral stalk, linking F(1) to F(0). This is ATP synthase subunit b from Aliivibrio fischeri (strain ATCC 700601 / ES114) (Vibrio fischeri).